The sequence spans 397 residues: Sporulation-specific protein 20 (397 aa).

Positions 1 to 26 (MGFRKILASKSHHSRHHNQHHKNLKL) are disordered. The interval 4 to 50 (RKILASKSHHSRHHNQHHKNLKLQNHRYVLISNITGSHETKYLSPFR) is inhibitory region. Positions 10 to 26 (KSHHSRHHNQHHKNLKL) are enriched in basic residues. The interval 51 to 95 (MDNCSGSRRRDRLHVKLKSLRNKIHKQLHPNCRFDDATKTSDDKC) is positive regulatory region. In terms of domain architecture, t-SNARE coiled-coil homology spans 330–392 (NQMEIDLYGN…QAKRYRLEKV (63 aa)).

The protein belongs to the SNAP-25 family. In terms of assembly, interacts with the t-SNARE SSO1 and the v-SNARE SNC2.

The protein localises to the cell membrane. It localises to the prospore membrane. Functionally, required to maintain the prospore membrane to the nucleus during sporulation in order to capture the daughter nuclei and form the spores. Mediates the fusion of exocytic vesicles with the plasma membrane during sporulation through its interactions with the t-SNARE SSO1 and v-SNARE SNC2. This chain is Sporulation-specific protein 20 (SPO20), found in Saccharomyces cerevisiae (strain ATCC 204508 / S288c) (Baker's yeast).